The chain runs to 5141 residues: SCO-spondin (5141 aa).

A signal peptide spans 1–17; that stretch reads MLLPALLFGMLWAPANG. The 85-residue stretch at 18 to 102 folds into the EMI domain; the sequence is HWCEQIETVH…ACCPGWGGIH (85 aa). 4 N-linked (GlcNAc...) asparagine glycosylation sites follow: Asn88, Asn130, Asn150, and Asn167. The VWFD 1 domain occupies 193-364; that stretch reads ATCATWSGFH…RLPGYEPGCL (172 aa). 3 cysteine pairs are disulfide-bonded: Cys195/Cys325, Cys217/Cys363, and Cys239/Cys245. Positions 472-527 constitute a TIL 1 domain; the sequence is CPGGQLYSDCISSCPPSCSAVAQGEEGSCGKECVSGCECPTGLFWDGALCVPAAHC. Residues 565–738 enclose the VWFD 2 domain; the sequence is AECAVGGDGH…FQVSGDGRCP (174 aa). Disulfide bonds link Cys567-Cys700 and Cys591-Cys737. N-linked (GlcNAc...) asparagine glycosylation is found at Asn657 and Asn822. The 54-residue stretch at 830-883 folds into the TIL 2 domain; that stretch reads CPGGQVYQECAPACGHYCGEPEDCKELGSCVAGCNCPPGLLWDLEGQCVPPSMC. Residues Asn895, Asn949, and Asn991 are each glycosylated (N-linked (GlcNAc...) asparagine). Positions 1017–1187 constitute a VWFD 3 domain; it reads GWCQASGAPH…HSWRLNPLCP (171 aa). 3 disulfides stabilise this stretch: Cys1019-Cys1151, Cys1041-Cys1186, and Cys1062-Cys1069. Residues 1280–1336 form the TIL 3 domain; that stretch reads CEGGQVYEPCGSTCPPTCHDHHPELRWHCQAITCVEGCFCPEGTLLHGGTCVELTDC. An N-linked (GlcNAc...) asparagine glycan is attached at Asn1357. LDL-receptor class A domains lie at 1380–1417, 1420–1456, 1456–1492, and 1496–1534; these read GCAE…EGCD, VCGE…QGCL, LCPQ…ESCL, and SCTS…VHCS. Cystine bridges form between Cys1381/Cys1394, Cys1388/Cys1407, Cys1401/Cys1416, Cys1421/Cys1433, Cys1428/Cys1446, Cys1440/Cys1455, Cys1457/Cys1469, Cys1464/Cys1482, Cys1476/Cys1491, Cys1497/Cys1509, Cys1504/Cys1522, and Cys1516/Cys1533. The segment at 1533-1567 is disordered; that stretch reads CSSPSLPTPPAGIGQNPSTSSPDTSPSPVGSASPA. The span at 1549-1567 shows a compositional bias: low complexity; the sequence is PSTSSPDTSPSPVGSASPA. LDL-receptor class A domains are found at residues 1569–1605 and 1607–1646; these read PCSL…LDCG and PCKL…DVCE. Intrachain disulfides connect Cys1570–Cys1582, Cys1577–Cys1595, Cys1589–Cys1604, Cys1608–Cys1621, Cys1615–Cys1634, and Cys1628–Cys1645. N-linked (GlcNAc...) asparagine glycans are attached at residues Asn1655 and Asn1668. Positions 1660-1700 constitute an LDL-receptor class A 7 domain; the sequence is PCPEFSCPNGTCIDFLLVCDGSPDCELADETEPSLDEQGCG. Intrachain disulfides connect Cys1661/Cys1671, Cys1666/Cys1684, Cys1678/Cys1699, Cys1711/Cys1747, Cys1715/Cys1752, Cys1726/Cys1737, Cys1767/Cys1964, Cys1771/Cys1969, and Cys1781/Cys1791. TSP type-1 domains follow at residues 1699-1753 and 1755-1970; these read CGTW…EACP and DGEW…EPCE. Asn1725 carries an N-linked (GlcNAc...) asparagine glycan. Asn1814 carries an N-linked (GlcNAc...) asparagine glycan. EGF-like domains are found at residues 1829 to 1868 and 1869 to 1895; these read CPLT…GRCV and RPRQ…CQLC. The VWFC 1 domain occupies 1970–2030; sequence EGCEQWGLTY…GMGESCCHCA (61 aa). N-linked (GlcNAc...) asparagine glycosylation is present at Asn2035. Disulfide bonds link Cys2070–Cys2226, Cys2236–Cys2248, Cys2243–Cys2261, and Cys2255–Cys2270. Positions 2070–2226 constitute an F5/8 type C domain; sequence CYSPLGLAGL…IFLWVELLGC (157 aa). Residues 2087-2109 form a disordered region; that stretch reads PLEHSTRAAPVEAPTAGPGPRED. Asn2130 and Asn2148 each carry an N-linked (GlcNAc...) asparagine glycan. Positions 2235 to 2271 constitute an LDL-receptor class A 8 domain; it reads LCPGTRHRCANGDCALKGGPCDGAVDCEDGSDEEGCG. Positions 2262 to 2335 are disordered; that stretch reads EDGSDEEGCG…SPSASEGLLP (74 aa). Over residues 2276–2294 the composition is skewed to polar residues; sequence STASRVHSTARTPALSPTQ. The span at 2301 to 2314 shows a compositional bias: basic and acidic residues; that stretch reads HPREGLADMEHQQP. LDL-receptor class A domains are found at residues 2391 to 2427 and 2448 to 2484; these read RCGP…QHCA and LCSP…DDCV. Disulfide bonds link Cys2392–Cys2404, Cys2399–Cys2417, Cys2411–Cys2426, Cys2449–Cys2461, Cys2456–Cys2474, Cys2468–Cys2483, Cys2486–Cys2522, Cys2497–Cys2501, Cys2532–Cys2537, Cys2552–Cys2589, Cys2556–Cys2594, and Cys2567–Cys2579. TSP type-1 domains lie at 2485-2538 and 2540-2595; these read DCVL…QACP and AGAW…QLCP. Residues 2618–2660 form the TIL 4 domain; it reads PPCPPSCLDPEANRSCSGHCVEGCRCPPGLFLQDSHCLPLSEC. Asn2630 and Asn2679 each carry an N-linked (GlcNAc...) asparagine glycan. 3 consecutive TSP type-1 domains span residues 2700-2754, 2758-2813, and 2815-2868; these read SCGW…TDCG, PGWT…SLCP, and PSAW…HPCT. Cystine bridges form between Cys2701–Cys2739, Cys2712–Cys2716, Cys2749–Cys2753, Cys2769–Cys2807, Cys2773–Cys2812, Cys2789–Cys2797, Cys2827–Cys2862, Cys2831–Cys2867, and Cys2842–Cys2852. Asn2921 and Asn2951 each carry an N-linked (GlcNAc...) asparagine glycan. TSP type-1 domains follow at residues 2969 to 3024 and 3025 to 3068; these read ACGW…RPCQ and GPGA…QPCA. 3 cysteine pairs are disulfide-bonded: Cys2970–Cys3008, Cys2981–Cys2985, and Cys3018–Cys3023. Asn3046, Asn3101, Asn3148, and Asn3158 each carry an N-linked (GlcNAc...) asparagine glycan. Residues 3075 to 3127 enclose the TIL 5 domain; that stretch reads CPKDQQWLDCAQGPASCAHLSTPREANQTCHPGCYCLSGMLLLNNVCVPAQDC. TSP type-1 domains lie at 3168–3235 and 3237–3292; these read QPAW…PGCN and AGVW…QPCP. 6 cysteine pairs are disulfide-bonded: Cys3180/Cys3229, Cys3184/Cys3234, Cys3195/Cys3219, Cys3249/Cys3286, Cys3253/Cys3291, and Cys3264/Cys3276. N-linked (GlcNAc...) asparagine glycosylation is present at Asn3295. In terms of domain architecture, TIL 6 spans 3300 to 3350; it reads EGAEYSPCGPPCPRSCDDLVHCMWHCQPGCYCPPGKVLSADGAICVQPHHC. An N-linked (GlcNAc...) asparagine glycan is attached at Asn3384. 2 TSP type-1 domains span residues 3393 to 3455 and 3457 to 3512; these read SGDW…TACP and DGAW…TPCT. Intrachain disulfides connect Cys3405/Cys3448, Cys3409/Cys3454, Cys3420/Cys3432, Cys3469/Cys3504, Cys3472/Cys3511, and Cys3482/Cys3494. N-linked (GlcNAc...) asparagine glycosylation is present at Asn3506. Positions 3514–3570 constitute a TIL 7 domain; it reads CGGGQDLLPCGQPCPHSCQDLSLGSTCQPGSSGCQSGCGCPPGQLSQDGLCVFPADC. Asn3584 and Asn3611 each carry an N-linked (GlcNAc...) asparagine glycan. Residues 3630–3678 enclose the TSP type-1 14 domain; that stretch reads PGIWSSWGPWEKCSVPCGGGEQLRSRQCARPPCPGLAQQSRTCHIHVCR. Disulfide bonds link Cys3642/Cys3672, Cys3646/Cys3677, and Cys3657/Cys3662. The N-linked (GlcNAc...) asparagine glycan is linked to Asn3787. TSP type-1 domains are found at residues 3806–3862, 3876–3928, 3942–3998, and 4000–4055; these read RGYF…PECP, AGGW…PSCT, NCFW…RACP, and PGGW…MPCE. 3 cysteine pairs are disulfide-bonded: Cys3818–Cys3856, Cys3822–Cys3861, and Cys3834–Cys3846. Asn3910 carries N-linked (GlcNAc...) asparagine glycosylation. 6 disulfide bridges follow: Cys3943–Cys3979, Cys3954–Cys3958, Cys3992–Cys3997, Cys4012–Cys4049, Cys4016–Cys4054, and Cys4027–Cys4039. Residues 4058–4113 form the TIL 8 domain; it reads CPAGMEMVSCANRCPYSCSDLQEAVMCQEDQACQLGCRCSEGFLEQDGGCVPVGHC. The N-linked (GlcNAc...) asparagine glycan is linked to Asn4135. TSP type-1 domains follow at residues 4155-4208, 4249-4304, 4306-4362, and 4364-4418; these read HCAW…DPCP, PGGW…QLCL, LLEI…GPCQ, and DCMW…GNCS. Cystine bridges form between Cys4156–Cys4192, Cys4167–Cys4171, Cys4202–Cys4207, Cys4261–Cys4298, Cys4265–Cys4303, and Cys4276–Cys4288. N-linked (GlcNAc...) asparagine glycosylation is present at Asn4345. Disulfide bonds link Cys4365-Cys4402, Cys4376-Cys4378, and Cys4412-Cys4417. Asn4416 carries N-linked (GlcNAc...) asparagine glycosylation. The region spanning 4422–4477 is the TIL 9 domain; it reads CLPPFEFQSCGSPCAGLCATHLSHQLCQDLPPCQPGCYCPMGLLEQDGGCILPEQC. Asn4557 is a glycosylation site (N-linked (GlcNAc...) asparagine). A TSP type-1 23 domain is found at 4608 to 4659; that stretch reads TCQWGPWGPWSPCQVPCSGGFKLRWREASDNSVGECRGPWAQTESCNMGSCP. 3 disulfide bridges follow: Cys4609/Cys4643, Cys4620/Cys4624, and Cys4653/Cys4658. Residues 4673-4719 enclose the TIL 10 domain; the sequence is DCANQCPRSCADLWEGVQCLQGPCSPGCRCPPGQLVQDGHCVPISSC. 3 N-linked (GlcNAc...) asparagine glycosylation sites follow: Asn4727, Asn4744, and Asn4749. Residues 4759–4812 enclose the TSP type-1 24 domain; the sequence is CPVLGPWSPWSECSAVCGGGTMVRYRSCEEHPDSAPCQALDMEQRVECNLQTCP. 3 cysteine pairs are disulfide-bonded: Cys4771–Cys4806, Cys4775–Cys4811, and Cys4786–Cys4795. The TIL 11 domain occupies 4814–4868; it reads CPPGQVLSTCATLCPSFCSHLWPGTICVREPCQLGCGCPGGQLLHSGTCIPPEAC. N-linked (GlcNAc...) asparagine glycans are attached at residues Asn4899, Asn4942, and Asn4949. The region spanning 4920-4978 is the TIL 12 domain; the sequence is CPPGEILQLGELRPCEKTCLEMNKTQAWSNCTEAQVPGCVCQLGHFRSHTGLCVPEDHC. Residues 4978–5036 enclose the VWFC 2 domain; sequence CECWHHGSPHLPGSEWQEACESCRCLHGKSVCTQHCPELSCAQGEVVVQEPGSCCPICQ. Intrachain disulfides connect Cys5047/Cys5095, Cys5061/Cys5112, Cys5071/Cys5128, and Cys5075/Cys5130. Residues 5047–5134 enclose the CTCK domain; sequence CRHLTELRNL…IHNCHCSACQ (88 aa). N-linked (GlcNAc...) asparagine glycosylation is present at Asn5055.

It belongs to the thrombospondin family.

Its subcellular location is the secreted. The protein localises to the extracellular space. In terms of biological role, involved in the modulation of neuronal aggregation. May be involved in developmental events during the formation of the central nervous system. In Rattus norvegicus (Rat), this protein is SCO-spondin.